Reading from the N-terminus, the 726-residue chain is ORC ubiquitin ligase 1 (726 aa).

An RING-type; degenerate zinc finger spans residues 18–56 (CHICLGKVRQPVICINNHVFCSICIDLWLKNNSQCPACR). 2 coiled-coil regions span residues 87–129 (LRKT…TILD) and 155–270 (ETVA…MNSI). Ser210 bears the Phosphoserine mark. Disordered regions lie at residues 276–334 (SADG…TSKA) and 436–460 (NVSN…ECFS). Residues 280-290 (KGSKGSEEDVV) are compositionally biased toward basic and acidic residues. Positions 304–318 (SSTSSSSHLAKPSSS) are enriched in low complexity. A compositionally biased stretch (polar residues) spans 319–334 (RLCDTSSARQESTSKA). The span at 446-457 (DISRSENEKKSE) shows a compositional bias: basic and acidic residues. 5 positions are modified to phosphoserine: Ser526, Ser553, Ser561, Ser568, and Ser570. Disordered regions lie at residues 570–602 (SSQG…DQLE) and 687–726 (QSPW…ATKS). Over residues 579-588 (EPDKLEEKTE) the composition is skewed to basic and acidic residues. Polar residues predominate over residues 589–602 (LNLSKGSLTNDQLE). Positions 713–726 (SSLSSASPSKATKS) are enriched in low complexity. Phosphoserine occurs at positions 719 and 721.

As to quaternary structure, associates with ORC complex. Binds to chromatin; association is cell cycle-regulated, absent from mitotic chromosomes, is associated with chromatin from G1 and partially released from chromatin from mid S-phase. Auto-ubiquitinated.

The protein resides in the chromosome. The enzyme catalyses S-ubiquitinyl-[E2 ubiquitin-conjugating enzyme]-L-cysteine + [acceptor protein]-L-lysine = [E2 ubiquitin-conjugating enzyme]-L-cysteine + N(6)-ubiquitinyl-[acceptor protein]-L-lysine.. Its function is as follows. E3 ubiquitin ligase essential for DNA replication origin activation during S phase. Acts as a replication origin selector which selects the origins to be fired and catalyzes the multi-mono-ubiquitination of a subset of chromatin-bound ORC3 and ORC5 during S-phase. This is ORC ubiquitin ligase 1 from Homo sapiens (Human).